Here is a 392-residue protein sequence, read N- to C-terminus: Sugar efflux transporter A (392 aa).

Over 1–10 the chain is Cytoplasmic; sequence MIWIMTMARR. A helical transmembrane segment spans residues 11 to 31; sequence MNGVYAAFMLVAFMMGVAGAL. At 32–48 the chain is on the periplasmic side; the sequence is QAPTLSLFLSREVGAQP. The helical transmembrane segment at 49 to 69 threads the bilayer; sequence FWIGLFYTVNAIAGIGVSLWL. Residues 70 to 81 are Cytoplasmic-facing; the sequence is AKRSDSQGDRRK. Residues 82 to 102 traverse the membrane as a helical segment; that stretch reads LIIFCCLMAIGNALLFAFNRH. The Periplasmic segment spans residues 103–106; it reads YLTL. A helical transmembrane segment spans residues 107 to 127; it reads ITCGVLLASLANTAMPQLFAL. Topologically, residues 128-149 are cytoplasmic; it reads AREYADNSAREVVMFSSVMRAQ. The chain crosses the membrane as a helical span at residues 150–170; the sequence is LSLAWVIGPPLAFMLALNYGF. Thr171 is a topological domain (periplasmic). A helical membrane pass occupies residues 172 to 192; the sequence is VMFSIAAGIFTLSLVLIAFML. The Cytoplasmic portion of the chain corresponds to 193 to 219; that stretch reads PSVARVELPSENALSMQGGWQDSNVRM. A helical transmembrane segment spans residues 220-240; sequence LFVASTLMWTCNTMYIIDMPL. Topologically, residues 241 to 251 are periplasmic; sequence WISSELGLPDK. The helical transmembrane segment at 252–272 threads the bilayer; the sequence is LAGFLMGTAAGLEIPAMILAG. Topologically, residues 273–282 are cytoplasmic; it reads YYVKRYGKRR. A helical transmembrane segment spans residues 283–303; it reads MMVIAVAAGVLFYTGLIFFNS. The Periplasmic portion of the chain corresponds to 304-308; it reads RMALM. Residues 309–329 traverse the membrane as a helical segment; it reads TLQLFNAVFIGIVAGIGMLWF. At 330-342 the chain is on the cytoplasmic side; it reads QDLMPGRAGAATT. The helical transmembrane segment at 343–363 threads the bilayer; the sequence is LFTNSISTGVILAGVIQGAIA. At 364–365 the chain is on the periplasmic side; it reads QS. Residues 366 to 386 traverse the membrane as a helical segment; it reads WGHFAVYWVIAVISVVALFLT. Over 387-392 the chain is Cytoplasmic; it reads AKVKDV.

Belongs to the major facilitator superfamily. Set transporter family.

Its subcellular location is the cell inner membrane. Involved in the efflux of sugars. The physiological role may be the detoxification of non-metabolizable sugar analogs. Can transport IPTG, lactose and glucose. Has broad substrate specificity, with preferences for glucosides or galactosides with alkyl or aryl substituents. This Escherichia coli (strain K12) protein is Sugar efflux transporter A (setA).